The sequence spans 152 residues: Large ribosomal subunit protein bL9 (152 aa).

This sequence belongs to the bacterial ribosomal protein bL9 family.

Binds to the 23S rRNA. The sequence is that of Large ribosomal subunit protein bL9 from Chlorobaculum tepidum (strain ATCC 49652 / DSM 12025 / NBRC 103806 / TLS) (Chlorobium tepidum).